The primary structure comprises 455 residues: Ornithine decarboxylase (455 aa).

Lys-67 carries the post-translational modification N6-(pyridoxal phosphate)lysine. Pyridoxal 5'-phosphate is bound by residues Ser-197, Gly-234, and 271–274 (EPGR). Ser-297 is modified (phosphoserine; by CK2). 325 to 326 (YD) serves as a coordination point for substrate. Cys-354 functions as the Proton donor; shared with dimeric partner in the catalytic mechanism. Cys-354 carries the post-translational modification S-nitrosocysteine. Position 355 (Asp-355) interacts with substrate. Tyr-383 provides a ligand contact to pyridoxal 5'-phosphate.

This sequence belongs to the Orn/Lys/Arg decarboxylase class-II family. In terms of assembly, homodimer. Only the dimer is catalytically active, as the active sites are constructed of residues from both monomers. The cofactor is pyridoxal 5'-phosphate.

The enzyme catalyses L-ornithine + H(+) = putrescine + CO2. The protein operates within amine and polyamine biosynthesis; putrescine biosynthesis via L-ornithine pathway; putrescine from L-ornithine: step 1/1. Its activity is regulated as follows. Inhibited by antizymes (AZs) OAZ1, OAZ2 and OAZ3 in response to polyamine levels. AZs inhibit the assembly of the functional homodimer by binding to ODC monomers. Additionally, OAZ1 targets ODC monomers for ubiquitin-independent proteolytic destruction by the 26S proteasome. In terms of biological role, catalyzes the first and rate-limiting step of polyamine biosynthesis that converts ornithine into putrescine, which is the precursor for the polyamines, spermidine and spermine. Polyamines are essential for cell proliferation and are implicated in cellular processes, ranging from DNA replication to apoptosis. This chain is Ornithine decarboxylase (ODC1), found in Cricetulus griseus (Chinese hamster).